Reading from the N-terminus, the 313-residue chain is Pyrimidine-specific ribonucleoside hydrolase RihA (313 aa).

H240 is a catalytic residue.

It belongs to the IUNH family. RihA subfamily.

Its function is as follows. Hydrolyzes cytidine or uridine to ribose and cytosine or uracil, respectively. This chain is Pyrimidine-specific ribonucleoside hydrolase RihA, found in Enterobacter sp. (strain 638).